Consider the following 105-residue polypeptide: V-type ATP synthase subunit F (105 aa).

This sequence belongs to the V-ATPase F subunit family.

Functionally, produces ATP from ADP in the presence of a proton gradient across the membrane. The polypeptide is V-type ATP synthase subunit F (Clostridium perfringens (strain 13 / Type A)).